A 488-amino-acid polypeptide reads, in one-letter code: Kynurenine 3-monooxygenase 2 (488 aa).

Belongs to the aromatic-ring hydroxylase family. KMO subfamily. FAD is required as a cofactor.

It is found in the mitochondrion outer membrane. The enzyme catalyses L-kynurenine + NADPH + O2 + H(+) = 3-hydroxy-L-kynurenine + NADP(+) + H2O. The protein operates within cofactor biosynthesis; NAD(+) biosynthesis; quinolinate from L-kynurenine: step 1/3. Its function is as follows. Catalyzes the hydroxylation of L-kynurenine (L-Kyn) to form 3-hydroxy-L-kynurenine (L-3OHKyn). Required for synthesis of quinolinic acid. The polypeptide is Kynurenine 3-monooxygenase 2 (bna4-2) (Aspergillus niger (strain ATCC MYA-4892 / CBS 513.88 / FGSC A1513)).